The sequence spans 194 residues: Orotate phosphoribosyltransferase (194 aa).

116–124 contacts 5-phospho-alpha-D-ribose 1-diphosphate; it reads EDIVTTGLS. The orotate site is built by T120 and R148.

It belongs to the purine/pyrimidine phosphoribosyltransferase family. PyrE subfamily. Homodimer. The cofactor is Mg(2+).

It carries out the reaction orotidine 5'-phosphate + diphosphate = orotate + 5-phospho-alpha-D-ribose 1-diphosphate. It functions in the pathway pyrimidine metabolism; UMP biosynthesis via de novo pathway; UMP from orotate: step 1/2. Catalyzes the transfer of a ribosyl phosphate group from 5-phosphoribose 1-diphosphate to orotate, leading to the formation of orotidine monophosphate (OMP). This is Orotate phosphoribosyltransferase from Caulobacter vibrioides (strain ATCC 19089 / CIP 103742 / CB 15) (Caulobacter crescentus).